A 530-amino-acid chain; its full sequence is Ubiquitin carboxyl-terminal hydrolase 17-like protein 19 (530 aa).

Residues 80–375 enclose the USP domain; the sequence is AGLQNMGNTC…QAYVLFYIQK (296 aa). Cysteine 89 acts as the Nucleophile in catalysis. Histidine 334 acts as the Proton acceptor in catalysis. Composition is skewed to basic and acidic residues over residues 382-392 and 398-413; these read SESVSRGREPR and DTDR…RDHP. 2 disordered regions span residues 382-413 and 476-530; these read SESV…RDHP and KNHH…LVCQ. Over residues 484–495 the composition is skewed to low complexity; the sequence is SSLLKLSSTTPT. A compositionally biased stretch (polar residues) spans 496-505; that stretch reads HQESMNTGTL. Residues 510 to 524 show a composition bias toward basic residues; it reads GRARRSKGKNKHSKR.

The protein belongs to the peptidase C19 family. USP17 subfamily.

It is found in the nucleus. The protein resides in the endoplasmic reticulum. The enzyme catalyses Thiol-dependent hydrolysis of ester, thioester, amide, peptide and isopeptide bonds formed by the C-terminal Gly of ubiquitin (a 76-residue protein attached to proteins as an intracellular targeting signal).. Functionally, deubiquitinating enzyme that removes conjugated ubiquitin from specific proteins to regulate different cellular processes that may include cell proliferation, progression through the cell cycle, apoptosis, cell migration, and the cellular response to viral infection. The polypeptide is Ubiquitin carboxyl-terminal hydrolase 17-like protein 19 (USP17L19) (Homo sapiens (Human)).